The sequence spans 239 residues: MTKPTIAGNRTGRKLGQRVKKKKLKASSREWLHRHINDPYVQRAQLEGYRARAAFKLLEIDEKHQILKGARRIIDLGAAPGSWSQIAAKVTGSTEDDIRVAAIDFLEMAHLPGVTILQLDFLDPDAPQRLVDAVGGEPDLVMSDMAAPTTGHHRTDHLRTMHLCEVAAHFAIEVLAEGGHFLAKTFQGGTERDLLNLLKQNFRQVVHVKPGASRAESVEMFLLAKGFKGRNVEHGTISA.

5 residues coordinate S-adenosyl-L-methionine: G81, W83, D104, D120, and D144. The active-site Proton acceptor is K184.

This sequence belongs to the class I-like SAM-binding methyltransferase superfamily. RNA methyltransferase RlmE family.

Its subcellular location is the cytoplasm. It carries out the reaction uridine(2552) in 23S rRNA + S-adenosyl-L-methionine = 2'-O-methyluridine(2552) in 23S rRNA + S-adenosyl-L-homocysteine + H(+). Functionally, specifically methylates the uridine in position 2552 of 23S rRNA at the 2'-O position of the ribose in the fully assembled 50S ribosomal subunit. This is Ribosomal RNA large subunit methyltransferase E from Rhizobium rhizogenes (strain K84 / ATCC BAA-868) (Agrobacterium radiobacter).